The following is a 180-amino-acid chain: ATP-dependent protease subunit HslV (180 aa).

Thr-9 is an active-site residue. Na(+)-binding residues include Ala-164, Cys-167, and Thr-170.

This sequence belongs to the peptidase T1B family. HslV subfamily. In terms of assembly, a double ring-shaped homohexamer of HslV is capped on each side by a ring-shaped HslU homohexamer. The assembly of the HslU/HslV complex is dependent on binding of ATP.

It localises to the cytoplasm. It carries out the reaction ATP-dependent cleavage of peptide bonds with broad specificity.. Its activity is regulated as follows. Allosterically activated by HslU binding. Its function is as follows. Protease subunit of a proteasome-like degradation complex believed to be a general protein degrading machinery. The protein is ATP-dependent protease subunit HslV of Leptospira interrogans serogroup Icterohaemorrhagiae serovar Lai (strain 56601).